We begin with the raw amino-acid sequence, 406 residues long: Phosphopentomutase (406 aa).

Residues D10, D305, H310, D346, H347, and H358 each contribute to the Mn(2+) site.

The protein belongs to the phosphopentomutase family. The cofactor is Mn(2+).

The protein localises to the cytoplasm. The enzyme catalyses 2-deoxy-alpha-D-ribose 1-phosphate = 2-deoxy-D-ribose 5-phosphate. It carries out the reaction alpha-D-ribose 1-phosphate = D-ribose 5-phosphate. It participates in carbohydrate degradation; 2-deoxy-D-ribose 1-phosphate degradation; D-glyceraldehyde 3-phosphate and acetaldehyde from 2-deoxy-alpha-D-ribose 1-phosphate: step 1/2. Functionally, isomerase that catalyzes the conversion of deoxy-ribose 1-phosphate (dRib-1-P) and ribose 1-phosphate (Rib-1-P) to deoxy-ribose 5-phosphate (dRib-5-P) and ribose 5-phosphate (Rib-5-P), respectively. The chain is Phosphopentomutase from Vibrio parahaemolyticus serotype O3:K6 (strain RIMD 2210633).